Reading from the N-terminus, the 283-residue chain is Pantothenate synthetase (283 aa).

Residue 34 to 41 (MGALHDGH) participates in ATP binding. Residue H41 is the Proton donor of the active site. Q65 is a binding site for (R)-pantoate. Q65 contributes to the beta-alanine binding site. 152–155 (GSKD) provides a ligand contact to ATP. (R)-pantoate is bound at residue Q158. ATP-binding positions include I181 and 189–192 (MSSR).

It belongs to the pantothenate synthetase family. In terms of assembly, homodimer.

Its subcellular location is the cytoplasm. It catalyses the reaction (R)-pantoate + beta-alanine + ATP = (R)-pantothenate + AMP + diphosphate + H(+). It participates in cofactor biosynthesis; (R)-pantothenate biosynthesis; (R)-pantothenate from (R)-pantoate and beta-alanine: step 1/1. Functionally, catalyzes the condensation of pantoate with beta-alanine in an ATP-dependent reaction via a pantoyl-adenylate intermediate. The sequence is that of Pantothenate synthetase from Rhodopseudomonas palustris (strain HaA2).